The sequence spans 70 residues: Putative membrane protein insertion efficiency factor (70 aa).

Belongs to the UPF0161 family.

The protein localises to the cell inner membrane. Its function is as follows. Could be involved in insertion of integral membrane proteins into the membrane. This chain is Putative membrane protein insertion efficiency factor, found in Geobacter sp. (strain M21).